A 229-amino-acid chain; its full sequence is E3 ubiquitin ligase TRIM40 (229 aa).

Residues 14-57 form an RING-type zinc finger; sequence CPICQESLKEAVSTNCGHLFCRVCLTQHVEKASASGVFCCPLCR. The B box-type zinc-finger motif lies at 66–107; sequence GTGYICPNHQKRVCRFCEESRLLLCVECLVSPEHMSHHELTI. Residues C71, H74, C93, and H99 each coordinate Zn(2+). A coiled-coil region spans residues 107 to 154; it reads IENALSHYKERLNRRSRKLRKDIAELQRLKAQQEKKLQALQQWLGQLE.

Belongs to the TRIM/RBCC family. In terms of assembly, interacts with NEDD8.

It catalyses the reaction S-ubiquitinyl-[E2 ubiquitin-conjugating enzyme]-L-cysteine + [acceptor protein]-L-lysine = [E2 ubiquitin-conjugating enzyme]-L-cysteine + N(6)-ubiquitinyl-[acceptor protein]-L-lysine.. E3 ubiquitin-protein ligase that plays a role in the limitation of the innate immune response. Mediates inhibition of the RLR signaling pathway by ubiquitinating RIGI and IFIH1 receptors, leading to their proteasomal degradation. Also promotes the neddylation of IKBKG/NEMO, stabilizing NFKBIA, and thereby inhibiting of NF-kappa-B nuclear translocation and activation. The chain is E3 ubiquitin ligase TRIM40 (TRIM40) from Pan troglodytes (Chimpanzee).